Consider the following 416-residue polypeptide: MFDTVCSLPLSSDLFSQAIHPTEPLVSIGLSSGHVQTFHLPAPSENGKAGYGHIDTVWRTRRHKGSCRCVGFGIDGETLYSAGTDGWVKAARTETGRVEWKFAVPRIGDKSGFQVDSPCLIHALSPQTLLLATDSGALHLFDLRDRSTEVSARPQQTHHPHDDYVSSLTPLPPSETSTSGYSKQWITTGGTTIAVTDLRRGILVRSEDQGEELISSSYVTGLKAGGTSKGEKLVVGGASGVLTLWEKGAWDDQDERIIVDRSLDGGESLEVIANVPDELGKGKVVAVGQSDGRVQFVQLGPNKVISELSHDDLEGVVGLGFDVQGRMISGGGTVVKVWHEAISDEEGNDDESDEEDIENGEGLGKKRKGGNGSSDEEEDSDDDMAGKDKGKRKKRKRGKGKDRSGGVHVMAFKGLD.

3 WD repeats span residues 9 to 48 (PLSS…ENGK), 62 to 101 (RHKG…VEWK), and 112 to 151 (GFQV…TEVS). The disordered stretch occupies residues 149-183 (EVSARPQQTHHPHDDYVSSLTPLPPSETSTSGYSK). Residues 166 to 179 (SSLTPLPPSETSTS) are compositionally biased toward low complexity. 3 WD repeats span residues 214–255 (ISSS…DQDE), 264–308 (DGGE…ISEL), and 309–348 (SHDD…EEGN). 2 stretches are compositionally biased toward acidic residues: residues 343–359 (SDEE…DIEN) and 374–383 (SDEEEDSDDD). Residues 343-416 (SDEEGNDDES…VHVMAFKGLD (74 aa)) are disordered. Residues 389–400 (KGKRKKRKRGKG) are compositionally biased toward basic residues.

It belongs to the WD repeat WDR55 family.

The protein resides in the nucleus. It is found in the nucleolus. The protein is WD repeat-containing protein JIP5 (JIP5) of Coccidioides immitis (strain RS) (Valley fever fungus).